Here is a 142-residue protein sequence, read N- to C-terminus: Hemoglobin anodic subunit alpha (142 aa).

Serine 1 carries the N-acetylserine modification. Residues 1 to 142 form the Globin domain; that stretch reads SLSTKDKAVV…LALALADRYR (142 aa). Histidine 59 is a binding site for O2. Histidine 88 lines the heme b pocket.

The protein belongs to the globin family. In terms of assembly, heterotetramer of two alpha chains and two beta chains. In terms of tissue distribution, red blood cells.

Involved in oxygen transport from gills to the various peripheral tissues. This is Hemoglobin anodic subunit alpha from Gymnothorax unicolor (Brown moray).